Reading from the N-terminus, the 353-residue chain is Uroporphyrinogen decarboxylase (353 aa).

Residues 29-33 (RQAGR), Phe-48, Asp-78, Tyr-154, Ser-209, and His-322 contribute to the substrate site.

It belongs to the uroporphyrinogen decarboxylase family. In terms of assembly, homodimer.

Its subcellular location is the cytoplasm. The enzyme catalyses uroporphyrinogen III + 4 H(+) = coproporphyrinogen III + 4 CO2. The protein operates within porphyrin-containing compound metabolism; protoporphyrin-IX biosynthesis; coproporphyrinogen-III from 5-aminolevulinate: step 4/4. Its function is as follows. Catalyzes the decarboxylation of four acetate groups of uroporphyrinogen-III to yield coproporphyrinogen-III. This is Uroporphyrinogen decarboxylase (hemE) from Bacillus subtilis (strain 168).